Here is a 115-residue protein sequence, read N- to C-terminus: Large ribosomal subunit protein uL22 (115 aa).

This sequence belongs to the universal ribosomal protein uL22 family. As to quaternary structure, part of the 50S ribosomal subunit.

Its function is as follows. This protein binds specifically to 23S rRNA; its binding is stimulated by other ribosomal proteins, e.g. L4, L17, and L20. It is important during the early stages of 50S assembly. It makes multiple contacts with different domains of the 23S rRNA in the assembled 50S subunit and ribosome. The globular domain of the protein is located near the polypeptide exit tunnel on the outside of the subunit, while an extended beta-hairpin is found that lines the wall of the exit tunnel in the center of the 70S ribosome. The chain is Large ribosomal subunit protein uL22 from Ligilactobacillus salivarius (strain UCC118) (Lactobacillus salivarius).